The chain runs to 173 residues: Translocon-associated protein subunit delta (173 aa).

An N-terminal signal peptide occupies residues 1–23 (MAAMASLGALALLLLSSLSRCSA). Residues 24-144 (EACLEPQITP…SVDHRGTWNG (121 aa)) lie on the Lumenal side of the membrane. An intrachain disulfide couples cysteine 26 to cysteine 57. Residue lysine 73 forms a Glycyl lysine isopeptide (Lys-Gly) (interchain with G-Cter in ubiquitin) linkage. The helical transmembrane segment at 145-165 (PWVSTEVLAAAIGLVIYYLAF) threads the bilayer. The Cytoplasmic segment spans residues 166–173 (SAKSHIQA).

It belongs to the TRAP-delta family. In terms of assembly, heterotetramer of TRAP-alpha, TRAP-beta, TRAP-delta and TRAP-gamma.

The protein localises to the endoplasmic reticulum membrane. In terms of biological role, TRAP proteins are part of a complex whose function is to bind calcium to the ER membrane and thereby regulate the retention of ER resident proteins. The chain is Translocon-associated protein subunit delta (SSR4) from Homo sapiens (Human).